Consider the following 390-residue polypeptide: S-adenosylmethionine synthase 2 (390 aa).

A Mg(2+)-binding site is contributed by Glu9. His15 contacts ATP. Position 43 (Glu43) interacts with K(+). Positions 56 and 99 each coordinate L-methionine. Residues 167 to 169 (DGK), 235 to 238 (SGRF), Asp246, 252 to 253 (RK), Ala269, Lys273, and Lys277 contribute to the ATP site. Asp246 is a binding site for L-methionine. Position 277 (Lys277) interacts with L-methionine.

The protein belongs to the AdoMet synthase family. Homotetramer. Mn(2+) is required as a cofactor. Mg(2+) serves as cofactor. Requires Co(2+) as cofactor. The cofactor is K(+).

The protein resides in the cytoplasm. It carries out the reaction L-methionine + ATP + H2O = S-adenosyl-L-methionine + phosphate + diphosphate. It participates in amino-acid biosynthesis; S-adenosyl-L-methionine biosynthesis; S-adenosyl-L-methionine from L-methionine: step 1/1. Catalyzes the formation of S-adenosylmethionine from methionine and ATP. The reaction comprises two steps that are both catalyzed by the same enzyme: formation of S-adenosylmethionine (AdoMet) and triphosphate, and subsequent hydrolysis of the triphosphate. This Petunia hybrida (Petunia) protein is S-adenosylmethionine synthase 2 (SAM2).